Consider the following 204-residue polypeptide: Small ribosomal subunit protein uS4 (204 aa).

Positions 1-46 are disordered; that stretch reads MSKRHSSKYKIDRRMGENIWGRPKSPVNRREYGPGQHGQRRRSKIS. The S4 RNA-binding domain maps to 94–157; it reads RRLDMIVYRA…QEMALVLEAQ (64 aa).

It belongs to the universal ribosomal protein uS4 family. In terms of assembly, part of the 30S ribosomal subunit. Contacts protein S5. The interaction surface between S4 and S5 is involved in control of translational fidelity.

One of the primary rRNA binding proteins, it binds directly to 16S rRNA where it nucleates assembly of the body of the 30S subunit. Its function is as follows. With S5 and S12 plays an important role in translational accuracy. The protein is Small ribosomal subunit protein uS4 of Zymomonas mobilis subsp. mobilis (strain ATCC 31821 / ZM4 / CP4).